We begin with the raw amino-acid sequence, 68 residues long: Serine rich endogenous peptide 22 (68 aa).

A signal peptide spans M1–A25. An SCOOP motif motif is present at residues K50 to A64. Positions S56–S58 match the SxS motif essential for MIK2 binding motif.

Belongs to the serine rich endogenous peptide (SCOOP) phytocytokine family. As to quaternary structure, interacts with MIK2 (via extracellular leucine-rich repeat domain); this interaction triggers the formation of complex between MIK2 and the BAK1/SERK3 and SERK4 coreceptors, and subsequent BAK1 activation by phosphorylation.

The protein localises to the cell membrane. It localises to the secreted. It is found in the extracellular space. The protein resides in the apoplast. Brassicaceae-specific phytocytokine (plant endogenous peptide released into the apoplast) perceived by MIK2 in a BAK1/SERK3 and SERK4 coreceptors-dependent manner, that modulates various physiological and antimicrobial processes including growth prevention and reactive oxygen species (ROS) response regulation. The polypeptide is Serine rich endogenous peptide 22 (Arabidopsis thaliana (Mouse-ear cress)).